A 174-amino-acid chain; its full sequence is uncharacterized protein (174 aa).

A helical membrane pass occupies residues 7–27 (LIILAIFTLWVGGFGYYLYLI).

The protein localises to the membrane. This is an uncharacterized protein from Rickettsia prowazekii (strain Madrid E).